A 258-amino-acid chain; its full sequence is MVLIRVLANLVILQLSYAQKSSELVIGGDECNINEHRFLVALYDSTTRNFLCGGVLIHPEWVITAKHCNKKSMVLYLGKHKQSVKFDDEQERFPKEKHFIRCNKPRTRWGEDIMLIRLNKPVNNSEHIAPLSLPSNPPIVGSVCRVMGWGSINKYIDVLPDEPRCANINLYNYTVCRGVFPRIPKKSKILCAGDLQGRLDSCHCDSGGPLICSEEFHGIVYRGPNPCAQPDKPALYTNIFDHLHWILSIMAGNATCYP.

The signal sequence occupies residues 1–18 (MVLIRVLANLVILQLSYA). Positions 19–24 (QKSSEL) are excised as a propeptide. The Peptidase S1 domain maps to 25–251 (VIGGDECNIN…HLHWILSIMA (227 aa)). Cystine bridges form between Cys31–Cys165, Cys52–Cys68, Cys102–Cys256, Cys144–Cys212, Cys176–Cys191, and Cys202–Cys227. Residues His67 and Asp112 each act as charge relay system in the active site. Asn123 and Asn172 each carry an N-linked (GlcNAc...) asparagine glycan. The active-site Charge relay system is Ser206. Asn253 carries an N-linked (GlcNAc...) asparagine glycan.

This sequence belongs to the peptidase S1 family. Snake venom subfamily. Monomer. Expressed by the venom gland.

Its subcellular location is the secreted. It carries out the reaction Selective cleavage of Arg-|-Xaa bond in fibrinogen, to form fibrin, and release fibrinopeptide A. The specificity of further degradation of fibrinogen varies with species origin of the enzyme.. Thrombin-like snake venom serine protease. Cleaves fibrinogen (FGA) to split of fibrinopeptides AM, AO, and AY; the aberrant fibrinogen is then incapable of being cross-linked, forming easily dispersible clots. This Calloselasma rhodostoma (Malayan pit viper) protein is Thrombin-like enzyme ancrod-2.